Consider the following 269-residue polypeptide: MFPENKMLLIAGPCVIEDNSVFETARRLKEIVAPYASSVHWIFKSSYDKANRSSVHNYRGPGLKLGLQTLAKIKEELDVEILTDVHSPDEAREAAKVCDIIQVPAFLCRQTDLLVTAGETQAIVNIKKGQFLSPWEMQGPIDKVLSTGNNKIILTERGCSFGYNNLVSDMRSIEVLRRFGFPVVFDGTHSVQLPGALHSQSGGQTEFIPVLTRSAIAAGVQGLFIETHPNPSSALSDAASMLSLKDLERLLPAWVQLFTYIQEMDAVSV.

Belongs to the KdsA family.

It localises to the cytoplasm. It carries out the reaction D-arabinose 5-phosphate + phosphoenolpyruvate + H2O = 3-deoxy-alpha-D-manno-2-octulosonate-8-phosphate + phosphate. The protein operates within carbohydrate biosynthesis; 3-deoxy-D-manno-octulosonate biosynthesis; 3-deoxy-D-manno-octulosonate from D-ribulose 5-phosphate: step 2/3. It participates in bacterial outer membrane biogenesis; lipopolysaccharide biosynthesis. This Chlamydia trachomatis serovar A (strain ATCC VR-571B / DSM 19440 / HAR-13) protein is 2-dehydro-3-deoxyphosphooctonate aldolase.